The chain runs to 253 residues: Zwei Ig domain protein zig-4 (253 aa).

The first 16 residues, 1–16, serve as a signal peptide directing secretion; it reads MFAIALLSFLVVLINA. Ig-like C2-type domains are found at residues 43 to 146 and 162 to 245; these read PAKI…AEVE and PEIV…TFLY. 2 cysteine pairs are disulfide-bonded: Cys-67–Cys-130 and Cys-183–Cys-229.

In terms of tissue distribution, expressed in PVT, ASK, BAG, M2 and ASI neurons. In L1 larvae, expressed in pharyngeal ectoderm and mesoderm.

The protein localises to the secreted. Required for maintaining axon position of PVQ and PVP neurons postembryonically in the ventral nerve cord (VNC) by preventing axons drifting into the opposite side of the VNC that could occur during body growth and movement. This chain is Zwei Ig domain protein zig-4, found in Caenorhabditis elegans.